The chain runs to 572 residues: Probable D-xylulose kinase A (572 aa).

Residues His95, Arg166, Asp282, and Asn283 each contribute to the substrate site. Residues Trp365, 470–471 (GG), and Asn474 each bind ATP.

Belongs to the FGGY kinase family.

Its subcellular location is the cytoplasm. The enzyme catalyses D-xylulose + ATP = D-xylulose 5-phosphate + ADP + H(+). Highly specific D-xylulose kinase which participates in the catabolism of xylose. Xylose is a major component of hemicelluloses such as xylan. Most fungi utilize D-xylose via three enzymatic reactions, xylose reductase (XR), xylitol dehydrogenase (XDH), and xylulokinase, to form xylulose 5-phosphate, which enters pentose phosphate pathway. The sequence is that of Probable D-xylulose kinase A (xkiA) from Aspergillus oryzae (strain ATCC 42149 / RIB 40) (Yellow koji mold).